Here is a 131-residue protein sequence, read N- to C-terminus: Protein NEGATIVE REGULATOR OF RESISTANCE (131 aa).

Disordered stretches follow at residues 1–33 and 51–131; these read MDAT…DEVS and TRRL…RAPA. The Nuclear localization signal motif lies at 12–15; sequence KRKR. Low complexity predominate over residues 116 to 131; that stretch reads PPSDAPATPRSARAPA.

The protein belongs to the NPR1-interactor family. Interacts with NPR1/NH1. Interacts with NPR2/NH2.

It localises to the nucleus. Functionally, acts as a negative regulator of disease resistance. Acts on basal resistance, age-related resistance and resistance mediated by the LRR receptor kinase XA21. Plants over-expressing NRR display enhanced susceptibility to the bacterial blight Xanthomonas oryzae pv. oryzae (Xoo). The chain is Protein NEGATIVE REGULATOR OF RESISTANCE from Oryza sativa subsp. indica (Rice).